Reading from the N-terminus, the 387-residue chain is 3-ketoacyl-CoA thiolase (387 aa).

Catalysis depends on C91, which acts as the Acyl-thioester intermediate. Active-site proton acceptor residues include H343 and C373.

It belongs to the thiolase-like superfamily. Thiolase family. Heterotetramer of two alpha chains (FadB) and two beta chains (FadA).

Its subcellular location is the cytoplasm. The catalysed reaction is an acyl-CoA + acetyl-CoA = a 3-oxoacyl-CoA + CoA. It participates in lipid metabolism; fatty acid beta-oxidation. Its function is as follows. Catalyzes the final step of fatty acid oxidation in which acetyl-CoA is released and the CoA ester of a fatty acid two carbons shorter is formed. The protein is 3-ketoacyl-CoA thiolase of Shigella flexneri serotype 5b (strain 8401).